Reading from the N-terminus, the 265-residue chain is Capsule polysaccharide export inner-membrane protein BexB (265 aa).

6 consecutive transmembrane segments (helical) span residues isoleucine 37–tryptophan 57, lysine 64–tryptophan 84, valine 121–isoleucine 141, phenylalanine 148–isoleucine 168, phenylalanine 178–phenylalanine 198, and glutamate 235–valine 255. The region spanning isoleucine 37–phenylalanine 258 is the ABC transmembrane type-2 domain.

The protein belongs to the ABC-2 integral membrane protein family.

The protein localises to the cell inner membrane. Its function is as follows. May form an ATP-driven capsule polysaccharide export apparatus, in association with the BexA, BexC and BexD proteins. The chain is Capsule polysaccharide export inner-membrane protein BexB (bexB) from Haemophilus influenzae.